A 264-amino-acid polypeptide reads, in one-letter code: MNAVAACFNALRQRGECALIPFLTAGDPDLATTAEALRILDRAGADLIELGVPYSDPLADGPVIQAAATRALQKGVKLDDVLAIVREVHQDIAAPIILFTYYNPIFYQGVEVFLDKIKAAGVKGLVVPDLPLEESDRLLEATAERGLELILLVAPTSSPERQTAIAKKSQGFVYLVSVTGVTGVRTEVGSRVEALLAGMRQVTDKPIGVGFGISQPEQAEQVKAWGADAVIVGSAMVKRLAEGTPTEGLQALETFCRELKTAIS.

Catalysis depends on proton acceptor residues glutamate 49 and aspartate 60.

It belongs to the TrpA family. In terms of assembly, tetramer of two alpha and two beta chains.

The catalysed reaction is (1S,2R)-1-C-(indol-3-yl)glycerol 3-phosphate + L-serine = D-glyceraldehyde 3-phosphate + L-tryptophan + H2O. The protein operates within amino-acid biosynthesis; L-tryptophan biosynthesis; L-tryptophan from chorismate: step 5/5. In terms of biological role, the alpha subunit is responsible for the aldol cleavage of indoleglycerol phosphate to indole and glyceraldehyde 3-phosphate. This is Tryptophan synthase alpha chain from Synechocystis sp. (strain ATCC 27184 / PCC 6803 / Kazusa).